A 341-amino-acid chain; its full sequence is HMG box-containing protein C10F6.08c (341 aa).

Residues 68 to 77 (SEAKSREFGQ) show a composition bias toward basic and acidic residues. Disordered regions lie at residues 68-195 (SEAK…SNAK) and 236-341 (LTEE…SSNA). 2 stretches are compositionally biased toward polar residues: residues 116-157 (DTNV…QVVQ) and 165-177 (NTDP…ITNL). A compositionally biased stretch (low complexity) spans 178 to 195 (KTESSKSSGAKKATSNAK). The HMG box DNA-binding region spans 195 to 263 (KITDTMLFNH…KAREARRRRS (69 aa)). 2 stretches are compositionally biased toward basic and acidic residues: residues 238 to 256 (EEEK…EKAR) and 269 to 304 (KLEK…GQKE). 2 positions are modified to phosphothreonine: Thr-314 and Thr-315. Phosphoserine is present on Ser-316.

The protein localises to the nucleus. The polypeptide is HMG box-containing protein C10F6.08c (Schizosaccharomyces pombe (strain 972 / ATCC 24843) (Fission yeast)).